We begin with the raw amino-acid sequence, 223 residues long: Glutathione S-transferase A1 (223 aa).

Methionine 1 carries the post-translational modification N-acetylmethionine. Alanine 2 carries the N-acetylalanine; in Glutathione S-transferase A1, N-terminally processed modification. Residues 3 to 83 enclose the GST N-terminal domain; it reads GKPVLHYFNA…YIATKYDLYG (81 aa). An N6-succinyllysine modification is found at lysine 4. Glutathione is bound by residues tyrosine 9, lysine 45, 54 to 55, and 67 to 68; these read QV and QT. The GST C-terminal domain occupies 85-208; that stretch reads DMKERALIDM…QPGSQRKPPM (124 aa).

The protein belongs to the GST superfamily. Alpha family. In terms of assembly, homodimer. In terms of tissue distribution, expressed in the liver, skin and kidney.

It catalyses the reaction RX + glutathione = an S-substituted glutathione + a halide anion + H(+). The catalysed reaction is prostaglandin A2 + glutathione = prostaglandin A2-S-(R)-glutathione. The enzyme catalyses prostaglandin J2 + glutathione = prostaglandin J2-S-(R)-glutathione. It carries out the reaction (13S)-hydroperoxy-(9Z,11E)-octadecadienoate + 2 glutathione = (13S)-hydroxy-(9Z,11E)-octadecadienoate + glutathione disulfide + H2O. It catalyses the reaction androst-5-ene-3,17-dione = androst-4-ene-3,17-dione. Glutathione S-transferase that catalyzes the nucleophilic attack of the sulfur atom of glutathione on the electrophilic groups of a wide range of exogenous and endogenous compounds. Involved in the formation of glutathione conjugates of both prostaglandin A2 (PGA2) and prostaglandin J2 (PGJ2). It also catalyzes the isomerization of D5-androstene-3,17-dione (AD) into D4-androstene-3,17-dione and may therefore play an important role in hormone biosynthesis. Through its glutathione-dependent peroxidase activity toward the fatty acid hydroperoxide (13S)-hydroperoxy-(9Z,11E)-octadecadienoate/13-HPODE it is also involved in the metabolism of oxidized linoleic acid. The protein is Glutathione S-transferase A1 (Gsta1) of Mus musculus (Mouse).